Here is a 263-residue protein sequence, read N- to C-terminus: Hydroxyethylthiazole kinase (263 aa).

Met41 provides a ligand contact to substrate. 2 residues coordinate ATP: Lys117 and Ser163. Position 190 (Gly190) interacts with substrate.

The protein belongs to the Thz kinase family. Requires Mg(2+) as cofactor.

The enzyme catalyses 5-(2-hydroxyethyl)-4-methylthiazole + ATP = 4-methyl-5-(2-phosphooxyethyl)-thiazole + ADP + H(+). Its pathway is cofactor biosynthesis; thiamine diphosphate biosynthesis; 4-methyl-5-(2-phosphoethyl)-thiazole from 5-(2-hydroxyethyl)-4-methylthiazole: step 1/1. In terms of biological role, catalyzes the phosphorylation of the hydroxyl group of 4-methyl-5-beta-hydroxyethylthiazole (THZ). In Thermoanaerobacter sp. (strain X514), this protein is Hydroxyethylthiazole kinase.